Here is a 2096-residue protein sequence, read N- to C-terminus: HEAT repeat-containing protein 1 homolog (2096 aa).

One copy of the HEAT repeat lies at 2058–2096 (TVPFIAELLEDEHQRVEKNTRTGVQELETILGESVQKYL).

It belongs to the HEATR1/UTP10 family. In terms of assembly, part of the small subunit (SSU) processome, composed of more than 70 proteins and the RNA chaperone small nucleolar RNA (snoRNA) U3. Interacts with MYC; the interaction is required for localization of MYC to the nucleolus.

It localises to the nucleus. Its subcellular location is the nucleolus. Functionally, ribosome biogenesis factor; required for recruitment of Myc to nucleoli. Involved in nucleolar processing of pre-18S ribosomal RNA. Required for optimal pre-ribosomal RNA transcription by RNA polymerase I. Part of the small subunit (SSU) processome, first precursor of the small eukaryotic ribosomal subunit. During the assembly of the SSU processome in the nucleolus, many ribosome biogenesis factors, an RNA chaperone and ribosomal proteins associate with the nascent pre-rRNA and work in concert to generate RNA folding, modifications, rearrangements and cleavage as well as targeted degradation of pre-ribosomal RNA by the RNA exosome. Involved in neuronal-lineage cell proliferation during larval development. This chain is HEAT repeat-containing protein 1 homolog, found in Drosophila melanogaster (Fruit fly).